Reading from the N-terminus, the 185-residue chain is Anaphase-promoting complex subunit 10 (185 aa).

Threonine 2 carries the N-acetylthreonine modification. The 184-residue stretch at 2–185 (TTPNKTPPGA…IDFMMYRSIR (184 aa)) folds into the DOC domain. The residue at position 169 (lysine 169) is an N6-acetyllysine.

This sequence belongs to the APC10 family. In terms of assembly, the mammalian APC/C is composed at least of 14 distinct subunits ANAPC1, ANAPC2, CDC27/APC3, ANAPC4, ANAPC5, CDC16/APC6, ANAPC7, CDC23/APC8, ANAPC10, ANAPC11, CDC26/APC12, ANAPC13, ANAPC15 and ANAPC16 that assemble into a complex of at least 19 chains with a combined molecular mass of around 1.2 MDa; APC/C interacts with FZR1 and FBXO5. The C-terminus of APC10 binds to CDC27/APC3. Interacts with PIWIL1; interaction only takes place when PIWIL1 binds piRNA. Interacts with FBXO43; the interaction is direct.

The protein operates within protein modification; protein ubiquitination. Component of the anaphase promoting complex/cyclosome (APC/C), a cell cycle-regulated E3 ubiquitin ligase that controls progression through mitosis and the G1 phase of the cell cycle. The APC/C complex acts by mediating ubiquitination and subsequent degradation of target proteins: it mainly mediates the formation of 'Lys-11'-linked polyubiquitin chains and, to a lower extent, the formation of 'Lys-48'- and 'Lys-63'-linked polyubiquitin chains. The APC/C complex catalyzes assembly of branched 'Lys-11'-/'Lys-48'-linked branched ubiquitin chains on target proteins. This is Anaphase-promoting complex subunit 10 (ANAPC10) from Homo sapiens (Human).